Consider the following 1294-residue polypeptide: RNA replication protein (1294 aa).

The Alphavirus-like MT domain maps to 59-224; the sequence is NPFAVKVHSH…SHEFKQLEWL (166 aa). The (+)RNA virus helicase ATP-binding domain maps to 541 to 698; that stretch reads LKKQSKDWLA…TYQPFCRYYL (158 aa). Residue 570-577 participates in ATP binding; it reads GAGGSGKS. The (+)RNA virus helicase C-terminal domain maps to 699-832; sequence NITHRNKPDL…CVREERMNEI (134 aa). The region spanning 1071–1178 is the RdRp catalytic domain; that stretch reads RTCFSNDFTA…DYVASVKPSF (108 aa).

It belongs to the potexvirus/carlavirus RNA replication protein family.

The enzyme catalyses RNA(n) + a ribonucleoside 5'-triphosphate = RNA(n+1) + diphosphate. It carries out the reaction ATP + H2O = ADP + phosphate + H(+). RNA replication. The central part of this protein possibly functions as an ATP-binding helicase. The polypeptide is RNA replication protein (Trifolium (WCMV)).